A 378-amino-acid polypeptide reads, in one-letter code: N-acetyllactosaminide beta-1,3-N-acetylglucosaminyltransferase 4 (378 aa).

Over 1 to 28 (MLPPQPSAAHQGRGGRSGLLPKGPAMLC) the chain is Cytoplasmic. A helical; Signal-anchor for type II membrane protein transmembrane segment spans residues 29 to 49 (RLCWLVSYSLAVLLLGCLLFL). Topologically, residues 50-378 (RKAAKPAGDP…KCAAGPIPQR (329 aa)) are lumenal. Residues 59–81 (PTAHQPFWAPPTPRHSRCPPNHT) are disordered. Residue asparagine 192 is glycosylated (N-linked (GlcNAc...) asparagine).

It belongs to the glycosyltransferase 31 family. Mainly expressed in brain tissues such as whole brain, hippocampus, amygdala, cerebellum and caudate nucleus. Also expressed in colon, esophagus and kidney.

Its subcellular location is the golgi apparatus membrane. The catalysed reaction is a beta-D-galactosyl-(1-&gt;4)-N-acetyl-beta-D-glucosaminyl derivative + UDP-N-acetyl-alpha-D-glucosamine = an N-acetyl-beta-D-glucosaminyl-(1-&gt;3)-beta-D-galactosyl-(1-&gt;4)-N-acetyl-beta-D-glucosaminyl derivative + UDP + H(+). It participates in protein modification; protein glycosylation. Beta-1,3-N-acetylglucosaminyltransferase involved in the synthesis of poly-N-acetyllactosamine. Has activity for type 2 oligosaccharides. The sequence is that of N-acetyllactosaminide beta-1,3-N-acetylglucosaminyltransferase 4 (B3GNT4) from Homo sapiens (Human).